Here is a 427-residue protein sequence, read N- to C-terminus: Phosphomethylpyrimidine synthase (427 aa).

Substrate is bound by residues Asn66, Met95, Tyr124, His163, 185–187 (SRG), 226–229 (DGLR), and Glu265. Residue His269 participates in Zn(2+) binding. Tyr292 contributes to the substrate binding site. His333 is a Zn(2+) binding site. [4Fe-4S] cluster contacts are provided by Cys409, Cys412, and Cys416.

This sequence belongs to the ThiC family. Homodimer. It depends on [4Fe-4S] cluster as a cofactor.

The catalysed reaction is 5-amino-1-(5-phospho-beta-D-ribosyl)imidazole + S-adenosyl-L-methionine = 4-amino-2-methyl-5-(phosphooxymethyl)pyrimidine + CO + 5'-deoxyadenosine + formate + L-methionine + 3 H(+). It functions in the pathway cofactor biosynthesis; thiamine diphosphate biosynthesis. In terms of biological role, catalyzes the synthesis of the hydroxymethylpyrimidine phosphate (HMP-P) moiety of thiamine from aminoimidazole ribotide (AIR) in a radical S-adenosyl-L-methionine (SAM)-dependent reaction. This Syntrophus aciditrophicus (strain SB) protein is Phosphomethylpyrimidine synthase.